The primary structure comprises 207 residues: Uracil phosphoribosyltransferase (207 aa).

5-phospho-alpha-D-ribose 1-diphosphate-binding positions include arginine 77, arginine 102, and aspartate 129 to serine 137. Residues isoleucine 192 and glycine 197 to alanine 199 each bind uracil. Aspartate 198 contributes to the 5-phospho-alpha-D-ribose 1-diphosphate binding site.

It belongs to the UPRTase family. Mg(2+) is required as a cofactor.

It catalyses the reaction UMP + diphosphate = 5-phospho-alpha-D-ribose 1-diphosphate + uracil. It participates in pyrimidine metabolism; UMP biosynthesis via salvage pathway; UMP from uracil: step 1/1. With respect to regulation, allosterically activated by GTP. Functionally, catalyzes the conversion of uracil and 5-phospho-alpha-D-ribose 1-diphosphate (PRPP) to UMP and diphosphate. The protein is Uracil phosphoribosyltransferase of Dictyoglomus turgidum (strain DSM 6724 / Z-1310).